The following is a 492-amino-acid chain: Bifunctional shikimate kinase/3-dehydroquinate synthase (492 aa).

The interval 1–161 (MRIFLVGMMG…TALVVLEALD (161 aa)) is shikimate kinase. 10 to 15 (GSGKST) contributes to the ATP binding site. S14 is a binding site for Mg(2+). Residues D32, R56, and G78 each coordinate substrate. Residue R114 participates in ATP binding. Substrate is bound at residue R131. Positions 162–492 (EKEISTIEKP…DPLELLEVVD (331 aa)) are 3-dehydroquinate synthase.

In the N-terminal section; belongs to the shikimate kinase family. This sequence in the C-terminal section; belongs to the sugar phosphate cyclases superfamily. Dehydroquinate synthase family. Mg(2+) serves as cofactor. NAD(+) is required as a cofactor. Requires a divalent metal cation as cofactor.

It is found in the cytoplasm. It catalyses the reaction 7-phospho-2-dehydro-3-deoxy-D-arabino-heptonate = 3-dehydroquinate + phosphate. The catalysed reaction is shikimate + ATP = 3-phosphoshikimate + ADP + H(+). Its pathway is metabolic intermediate biosynthesis; chorismate biosynthesis; chorismate from D-erythrose 4-phosphate and phosphoenolpyruvate: step 2/7. It participates in metabolic intermediate biosynthesis; chorismate biosynthesis; chorismate from D-erythrose 4-phosphate and phosphoenolpyruvate: step 5/7. Catalyzes the specific phosphorylation of the 3-hydroxyl group of shikimic acid using ATP as a cosubstrate. In Thermotoga maritima (strain ATCC 43589 / DSM 3109 / JCM 10099 / NBRC 100826 / MSB8), this protein is Bifunctional shikimate kinase/3-dehydroquinate synthase (aroKB).